The sequence spans 309 residues: Ribosomal RNA small subunit methyltransferase H (309 aa).

S-adenosyl-L-methionine contacts are provided by residues 33-35 (GGH), aspartate 53, phenylalanine 79, aspartate 100, and glutamine 107.

The protein belongs to the methyltransferase superfamily. RsmH family.

It localises to the cytoplasm. It catalyses the reaction cytidine(1402) in 16S rRNA + S-adenosyl-L-methionine = N(4)-methylcytidine(1402) in 16S rRNA + S-adenosyl-L-homocysteine + H(+). Its function is as follows. Specifically methylates the N4 position of cytidine in position 1402 (C1402) of 16S rRNA. This Clostridium botulinum (strain ATCC 19397 / Type A) protein is Ribosomal RNA small subunit methyltransferase H.